The sequence spans 433 residues: Probable D-serine dehydratase (433 aa).

K110 is subject to N6-(pyridoxal phosphate)lysine.

It belongs to the serine/threonine dehydratase family. DsdA subfamily. Requires pyridoxal 5'-phosphate as cofactor.

It carries out the reaction D-serine = pyruvate + NH4(+). The protein is Probable D-serine dehydratase of Oenococcus oeni (strain ATCC BAA-331 / PSU-1).